Reading from the N-terminus, the 367-residue chain is Phosphoribosylaminoimidazole-succinocarboxamide synthase (367 aa).

Belongs to the SAICAR synthetase family.

It catalyses the reaction 5-amino-1-(5-phospho-D-ribosyl)imidazole-4-carboxylate + L-aspartate + ATP = (2S)-2-[5-amino-1-(5-phospho-beta-D-ribosyl)imidazole-4-carboxamido]succinate + ADP + phosphate + 2 H(+). Its pathway is purine metabolism; IMP biosynthesis via de novo pathway; 5-amino-1-(5-phospho-D-ribosyl)imidazole-4-carboxamide from 5-amino-1-(5-phospho-D-ribosyl)imidazole-4-carboxylate: step 1/2. The chain is Phosphoribosylaminoimidazole-succinocarboxamide synthase from Psychromonas ingrahamii (strain DSM 17664 / CCUG 51855 / 37).